A 306-amino-acid chain; its full sequence is Cell division protein ZipA (306 aa).

Residues methionine 1–leucine 6 are Periplasmic-facing. Residues valine 7 to isoleucine 27 form a helical membrane-spanning segment. Over arginine 28 to alanine 306 the chain is Cytoplasmic.

This sequence belongs to the ZipA family. Interacts with FtsZ via their C-terminal domains.

The protein localises to the cell inner membrane. Functionally, essential cell division protein that stabilizes the FtsZ protofilaments by cross-linking them and that serves as a cytoplasmic membrane anchor for the Z ring. Also required for the recruitment to the septal ring of downstream cell division proteins. The polypeptide is Cell division protein ZipA (Shewanella halifaxensis (strain HAW-EB4)).